We begin with the raw amino-acid sequence, 63 residues long: Potassium channel toxin Sp4 (63 aa).

Residues 1 to 20 form the signal peptide; sequence MNKVHFALFLLVLTVLAVSG. Intrachain disulfides connect Cys-31-Cys-53, Cys-38-Cys-58, and Cys-42-Cys-60.

Belongs to the long chain scorpion toxin family. Class 2 subfamily. In terms of tissue distribution, expressed by the venom gland.

The protein resides in the secreted. In terms of biological role, this recombinant toxin selectively inhibits mouse voltage-gated potassium channel Kv1.3/KCNA3 (IC(50)=24.73 nM). This is Potassium channel toxin Sp4 from Scorpiops pococki (Scorpion).